We begin with the raw amino-acid sequence, 260 residues long: uncharacterized protein (260 aa).

In terms of domain architecture, HTH iclR-type spans 7 to 67; the sequence is VPALTRAIDI…DHQENFCLWT (61 aa). The H-T-H motif DNA-binding region spans 28 to 47; it reads AATIIDTLGIPKSTAYLLLN. An IclR-ED domain is found at 82–251; sequence LRELARPRLT…ARDISRLLGW (170 aa).

This is an uncharacterized protein from Escherichia coli (strain K12).